The following is a 133-amino-acid chain: Small ribosomal subunit protein uS8 (133 aa).

The protein belongs to the universal ribosomal protein uS8 family. As to quaternary structure, part of the 30S ribosomal subunit. Contacts proteins S5 and S12.

In terms of biological role, one of the primary rRNA binding proteins, it binds directly to 16S rRNA central domain where it helps coordinate assembly of the platform of the 30S subunit. The polypeptide is Small ribosomal subunit protein uS8 (Prochlorococcus marinus (strain MIT 9312)).